We begin with the raw amino-acid sequence, 1450 residues long: ABC transporter G family member 37 (1450 aa).

Positions 158-431 (GNALHILPNK…FEFMGFRCPA (274 aa)) constitute an ABC transporter 1 domain. Residue 191–198 (GPPGSGKT) participates in ATP binding. Positions 509-721 (ELLKATIDRE…AQNAISTNEF (213 aa)) constitute an ABC transmembrane type-2 1 domain. 6 helical membrane-spanning segments follow: residues 527-547 (FMYI…MTTF), 559-579 (GMIY…NGFA), 614-634 (IPIT…VIGF), 646-666 (LLLL…AGIG), 670-690 (VVSH…GGFI), and 756-776 (IGLG…TVAL). The region spanning 852-1104 (ISFNDVRYSV…KLIEYFEGID (253 aa)) is the ABC transporter 2 domain. 897-904 (GVSGAGKT) provides a ligand contact to ATP. In terms of domain architecture, ABC transmembrane type-2 2 spans 1177 to 1391 (TQCLACLWKQ…TLYGLVASQF (215 aa)). Transmembrane regions (helical) follow at residues 1198–1218 (AVRL…FWNL), 1236–1256 (YAAV…VVVV), 1284–1304 (LPYI…MIGF), 1311–1331 (FLWY…YGMM), 1341–1361 (IAAI…GYLI), 1372–1392 (WYCW…SQFG), and 1422–1442 (VVAV…SFAI).

The protein belongs to the ABC transporter superfamily. ABCG family. PDR (TC 3.A.1.205) subfamily.

It is found in the membrane. May be a general defense protein. This chain is ABC transporter G family member 37, found in Oryza sativa subsp. japonica (Rice).